We begin with the raw amino-acid sequence, 241 residues long: Chaperone protein HifB (241 aa).

The first 27 residues, 1–27, serve as a signal peptide directing secretion; the sequence is MGKTMFKKTLLFFTALFFTALCAFSAN.

It belongs to the periplasmic pilus chaperone family.

The protein localises to the periplasm. Mediates assembly of pili by forming soluble multimeric complexes with pili subunits as an intermediate step in the assembly process. This protein is involved in type B pili (HifA) assembly. This is Chaperone protein HifB (hifB) from Haemophilus influenzae.